The chain runs to 137 residues: S-protein homolog 16 (137 aa).

An N-terminal signal peptide occupies residues 1–21; sequence MKNLLVFIFVFSLCMFDHVSG. A glycan (N-linked (GlcNAc...) asparagine) is linked at Asn87.

The protein belongs to the plant self-incompatibility (S1) protein family.

Its subcellular location is the secreted. The protein is S-protein homolog 16 of Arabidopsis thaliana (Mouse-ear cress).